A 590-amino-acid polypeptide reads, in one-letter code: RNA-binding protein 47 (590 aa).

The segment covering 1–21 (MTAEDSTTAMNSDPTVGSSTK) has biased composition (polar residues). The segment at 1-26 (MTAEDSTTAMNSDPTVGSSTKVPEGV) is disordered. RRM domains lie at 71–149 (CEVF…CSVD), 151–233 (CRLF…WAEP), and 246–318 (KILY…LAKP). An asymmetric dimethylarginine; alternate mark is found at Arg396 and Arg407. 2 positions are modified to omega-N-methylarginine; alternate: Arg396 and Arg407.

Belongs to the RRM RBM47 family. In terms of assembly, homodimer. Interacts with A1CF. Interacts with APOBEC1; form an mRNA editing complex. Interacts with RBPMS.

The protein localises to the nucleus. The protein resides in the cytoplasm. In terms of biological role, single-stranded RNA-binding protein that functions in a variety of RNA processes, including alternative splicing, RNA stabilization, and RNA editing. Functions as an enzyme-substrate adapter for the cytidine deaminase APOBEC1. With APOBEC1 forms an mRNA editing complex involved into cytidine to uridine editing of a variety of mRNA molecules. Through the binding of their 3'UTR, also stabilizes a variety of mRNAs and regulates the expression of genes such as the interferon alpha/beta receptor and interleukin-10. Also involved in the alternative splicing of several genes including TJP1. Binds the pre-mRNA (U)GCAUG consensus sequences in downstream intronic regions of alternative exons regulating their exclusion and inclusion into mRNAs. Independently of its RNA-binding activity, could negatively regulate MAVS by promoting its lysosomal degradation. The polypeptide is RNA-binding protein 47 (Rattus norvegicus (Rat)).